Consider the following 354-residue polypeptide: Sorbitol dehydrogenase (354 aa).

Cys-43 contacts Zn(2+). Substrate is bound at residue Tyr-49. Positions 67 and 68 each coordinate Zn(2+). Residue Glu-153 participates in substrate binding. NAD(+)-binding residues include Ile-181, Asp-201, and Arg-206. Residues Ser-208 and Ser-222 each carry the phosphoserine modification. Residues 270–272 (VGL) and 294–296 (VFR) each bind NAD(+). Residues Arg-296 and Tyr-297 each contribute to the substrate site.

It belongs to the zinc-containing alcohol dehydrogenase family. As to quaternary structure, homotetramer. The cofactor is Zn(2+). In terms of tissue distribution, expressed in liver.

The protein resides in the mitochondrion membrane. Its subcellular location is the cell projection. It is found in the cilium. It localises to the flagellum. The enzyme catalyses xylitol + NAD(+) = D-xylulose + NADH + H(+). The catalysed reaction is L-iditol + NAD(+) = keto-L-sorbose + NADH + H(+). It catalyses the reaction keto-D-fructose + NADH + H(+) = D-sorbitol + NAD(+). In terms of biological role, polyol dehydrogenase that catalyzes the reversible NAD(+)-dependent oxidation of various sugar alcohols. Is mostly active with xylitol, L-iditol and D-sorbitol (D-glucitol) as substrates, leading to the C2-oxidized products D-xylulose, L-sorbose and D-fructose, respectively. Is a key enzyme in the polyol pathway that interconverts glucose and fructose via sorbitol, which constitutes an important alternate route for glucose metabolism. May play a role in sperm motility by using sorbitol as an alternative energy source for sperm motility. The sequence is that of Sorbitol dehydrogenase (SORD) from Ovis aries (Sheep).